We begin with the raw amino-acid sequence, 422 residues long: L-2-hydroxyglutarate dehydrogenase (422 aa).

The protein belongs to the L2HGDH family. The cofactor is FAD.

It localises to the cell inner membrane. It catalyses the reaction (S)-2-hydroxyglutarate + a quinone = a quinol + 2-oxoglutarate. Its pathway is amino-acid degradation. Its function is as follows. Catalyzes the dehydrogenation of L-2-hydroxyglutarate (L2HG) to alpha-ketoglutarate and couples to the respiratory chain by feeding electrons from the reaction into the membrane quinone pool. Functions in a L-lysine degradation pathway that proceeds via cadaverine, glutarate and L-2-hydroxyglutarate. Also displays some oxidase activity in vitro on L-2-hydroxyglutarate with O2 as the electron acceptor, but this activity is most likely not physiological. This Salmonella houtenae protein is L-2-hydroxyglutarate dehydrogenase.